An 85-amino-acid chain; its full sequence is Antitoxin VapB4 (85 aa).

The protein belongs to the phD/YefM antitoxin family. In terms of assembly, interacts with cognate toxin VapC4.

In terms of biological role, antitoxin component of a type II toxin-antitoxin (TA) system. Antitoxin that counteracts the effect of the VapC4 toxin. The polypeptide is Antitoxin VapB4 (vapB4) (Mycobacterium tuberculosis (strain CDC 1551 / Oshkosh)).